The primary structure comprises 568 residues: 2-succinyl-5-enolpyruvyl-6-hydroxy-3-cyclohexene-1-carboxylate synthase (568 aa).

This sequence belongs to the TPP enzyme family. MenD subfamily. As to quaternary structure, homodimer. Mg(2+) serves as cofactor. It depends on Mn(2+) as a cofactor. The cofactor is thiamine diphosphate.

It catalyses the reaction isochorismate + 2-oxoglutarate + H(+) = 5-enolpyruvoyl-6-hydroxy-2-succinyl-cyclohex-3-ene-1-carboxylate + CO2. It functions in the pathway quinol/quinone metabolism; 1,4-dihydroxy-2-naphthoate biosynthesis; 1,4-dihydroxy-2-naphthoate from chorismate: step 2/7. It participates in cofactor biosynthesis; phylloquinone biosynthesis. Functionally, catalyzes the thiamine diphosphate-dependent decarboxylation of 2-oxoglutarate and the subsequent addition of the resulting succinic semialdehyde-thiamine pyrophosphate anion to isochorismate to yield 2-succinyl-5-enolpyruvyl-6-hydroxy-3-cyclohexene-1-carboxylate (SEPHCHC). The chain is 2-succinyl-5-enolpyruvyl-6-hydroxy-3-cyclohexene-1-carboxylate synthase from Synechococcus sp. (strain CC9902).